We begin with the raw amino-acid sequence, 216 residues long: Adenylate kinase (216 aa).

Position 10–15 (10–15) interacts with ATP; that stretch reads GAGKGT. The tract at residues 30 to 59 is NMP; it reads STGDMLRAAVSAQTEVGKRAKAVMDAGKLV. Residues Thr31, Arg36, 57 to 59, 85 to 88, and Gln92 contribute to the AMP site; these read KLV and GFPR. Positions 126 to 163 are LID; the sequence is GRYTCANCGTGYHDENLKPKVEGVCDKCGSTHFKRRPD. Arg127 lines the ATP pocket. Zn(2+) is bound by residues Cys130, Cys133, Cys150, and Cys153. Residues Arg160 and Arg172 each contribute to the AMP site. Residue Ala200 participates in ATP binding.

The protein belongs to the adenylate kinase family. Monomer.

It is found in the cytoplasm. It carries out the reaction AMP + ATP = 2 ADP. Its pathway is purine metabolism; AMP biosynthesis via salvage pathway; AMP from ADP: step 1/1. Catalyzes the reversible transfer of the terminal phosphate group between ATP and AMP. Plays an important role in cellular energy homeostasis and in adenine nucleotide metabolism. This is Adenylate kinase from Allorhizobium ampelinum (strain ATCC BAA-846 / DSM 112012 / S4) (Agrobacterium vitis (strain S4)).